The sequence spans 618 residues: Carotenoid cleavage dioxygenase 7, chloroplastic (618 aa).

The N-terminal 31 residues, 1 to 31 (MSLPIPPKFLPPLKSPPIHHHQTPPPLAPPR), are a transit peptide targeting the chloroplast. Positions 11–34 (PPLKSPPIHHHQTPPPLAPPRAAI) are disordered. Fe cation contacts are provided by His266, His319, His398, and His612.

This sequence belongs to the carotenoid oxygenase family. Fe(2+) is required as a cofactor. Expressed in flowers, siliques, inflorescence stems, petiole, leaves and roots.

It localises to the plastid. The protein localises to the chloroplast. The catalysed reaction is 9-cis-beta-carotene + O2 = 9-cis-10'-apo-beta-carotenal + beta-ionone. Involved in strigolactones biosynthesis by cleaving asymmetrically a variety of linear and cyclic carotenoids at the 9-10 double bond. Produces one C(13) beta-ionone and the C(27) 10'-apo-beta-carotenal. Strigolactones are hormones that inhibit tillering and shoot branching through the MAX-dependent pathway, contribute to the regulation of shoot architectural response to phosphate-limiting conditions and function as rhizosphere signal that stimulates hyphal branching of arbuscular mycorrhizal fungi and trigger seed germination of root parasitic weeds. No activity on lycopene, lutein, zeaxanthin, violaxanthin or neoxanthin. Probably not involved in abscisic acid biosynthesis. This is Carotenoid cleavage dioxygenase 7, chloroplastic (CCD7) from Arabidopsis thaliana (Mouse-ear cress).